The sequence spans 434 residues: Nicotinate phosphoribosyltransferase (434 aa).

The residue at position 242 (H242) is a Phosphohistidine; by autocatalysis.

This sequence belongs to the NAPRTase family. In terms of processing, transiently phosphorylated on a His residue during the reaction cycle. Phosphorylation strongly increases the affinity for substrates and increases the rate of nicotinate D-ribonucleotide production. Dephosphorylation regenerates the low-affinity form of the enzyme, leading to product release.

The catalysed reaction is nicotinate + 5-phospho-alpha-D-ribose 1-diphosphate + ATP + H2O = nicotinate beta-D-ribonucleotide + ADP + phosphate + diphosphate. It participates in cofactor biosynthesis; NAD(+) biosynthesis; nicotinate D-ribonucleotide from nicotinate: step 1/1. Functionally, catalyzes the synthesis of beta-nicotinate D-ribonucleotide from nicotinate and 5-phospho-D-ribose 1-phosphate at the expense of ATP. The sequence is that of Nicotinate phosphoribosyltransferase from Rhizobium etli (strain CIAT 652).